The chain runs to 548 residues: uncharacterized protein (548 aa).

Residues 8-200 (KLFADMIIQG…LLCVYEGFLK (193 aa)) enclose the DhaL domain.

This is an uncharacterized protein from Staphylococcus aureus (strain NCTC 8325 / PS 47).